The sequence spans 827 residues: Periplasmic nitrate reductase (827 aa).

Residues 1–32 constitute a signal peptide (tat-type signal); that stretch reads MELSRRDFMKANAAVAAAAAAGIVLPVKNVQA. The 57-residue stretch at 37–93 folds into the 4Fe-4S Mo/W bis-MGD-type domain; the sequence is IKWDKAPCRFCGTGCSVLVGTKDGRVVATQGDPDAEVNRGLNCIKGYFLSKIMYGAD. Positions 44, 47, 51, and 79 each coordinate [4Fe-4S] cluster. Mo-bis(molybdopterin guanine dinucleotide) is bound by residues Lys-81, Gln-148, Asn-173, Cys-177, 210–217, 241–245, Met-371, Gln-375, Asn-481, 507–508, Lys-530, Asp-557, and 717–726; these read WGSNMAEM, STFEH, SD, and TGRVLEHWHT. Position 793 (Phe-793) interacts with substrate. 2 residues coordinate Mo-bis(molybdopterin guanine dinucleotide): Asn-801 and Lys-818.

The protein belongs to the prokaryotic molybdopterin-containing oxidoreductase family. NasA/NapA/NarB subfamily. Component of the periplasmic nitrate reductase NapAB complex composed of NapA and NapB. The cofactor is [4Fe-4S] cluster. Requires Mo-bis(molybdopterin guanine dinucleotide) as cofactor. Post-translationally, predicted to be exported by the Tat system. The position of the signal peptide cleavage has not been experimentally proven.

It is found in the periplasm. It carries out the reaction 2 Fe(II)-[cytochrome] + nitrate + 2 H(+) = 2 Fe(III)-[cytochrome] + nitrite + H2O. Functionally, catalytic subunit of the periplasmic nitrate reductase complex NapAB. Receives electrons from NapB and catalyzes the reduction of nitrate to nitrite. This chain is Periplasmic nitrate reductase, found in Haemophilus ducreyi (strain 35000HP / ATCC 700724).